We begin with the raw amino-acid sequence, 310 residues long: Succinate dehydrogenase assembly factor 2, mitochondrial (310 aa).

Positions 35 to 48 are enriched in basic and acidic residues; it reads LKDGSDEASPEVKA. Residues 35 to 67 form a disordered region; sequence LKDGSDEASPEVKAHRANQANKAPNQFVPNTTS. Polar residues predominate over residues 52–67; it reads NQANKAPNQFVPNTTS.

This sequence belongs to the SDHAF2 family. Interacts with the flavoprotein subunit within the SDH catalytic dimer.

The protein resides in the mitochondrion matrix. In terms of biological role, plays an essential role in the assembly of succinate dehydrogenase (SDH), an enzyme complex (also referred to as respiratory complex II) that is a component of both the tricarboxylic acid (TCA) cycle and the mitochondrial electron transport chain, and which couples the oxidation of succinate to fumarate with the reduction of ubiquinone (coenzyme Q) to ubiquinol. Required for flavinylation (covalent attachment of FAD) of the flavoprotein subunit of the SDH catalytic dimer. This is Succinate dehydrogenase assembly factor 2, mitochondrial from Penicillium rubens (strain ATCC 28089 / DSM 1075 / NRRL 1951 / Wisconsin 54-1255) (Penicillium chrysogenum).